The primary structure comprises 521 residues: Anaerobic nitric oxide reductase flavorubredoxin (521 aa).

A zinc metallo-hydrolase region spans residues His30–Ile210. 6 residues coordinate Fe cation: His79, Glu81, Asp83, His147, Asp166, and His227. A Flavodoxin-like domain is found at Ile254–Ala393. FMN contacts are provided by residues Ser260–Asn264 and Ala342–Ile369. The Rubredoxin-like domain maps to Asp464–Cys515. Residues Cys469, Cys472, Cys502, and Cys505 each contribute to the Fe cation site.

The protein in the N-terminal section; belongs to the zinc metallo-hydrolase group 3 family. In terms of assembly, homotetramer. Requires Fe cation as cofactor. The cofactor is FMN.

The protein resides in the cytoplasm. It participates in nitrogen metabolism; nitric oxide reduction. Anaerobic nitric oxide reductase; uses NADH to detoxify nitric oxide (NO), protecting several 4Fe-4S NO-sensitive enzymes. Has at least 2 reductase partners, only one of which (NorW, flavorubredoxin reductase) has been identified. NO probably binds to the di-iron center; electrons enter from the NorW at rubredoxin and are transferred sequentially to the FMN center and the di-iron center. Also able to function as an aerobic oxygen reductase. The sequence is that of Anaerobic nitric oxide reductase flavorubredoxin from Aeromonas salmonicida (strain A449).